The sequence spans 319 residues: 4-diphosphocytidyl-2-C-methyl-D-erythritol kinase (319 aa).

The active site involves Lys-21. 106–116 (PIGAGLAGGSS) contributes to the ATP binding site. Asp-148 is a catalytic residue.

Belongs to the GHMP kinase family. IspE subfamily.

The catalysed reaction is 4-CDP-2-C-methyl-D-erythritol + ATP = 4-CDP-2-C-methyl-D-erythritol 2-phosphate + ADP + H(+). It functions in the pathway isoprenoid biosynthesis; isopentenyl diphosphate biosynthesis via DXP pathway; isopentenyl diphosphate from 1-deoxy-D-xylulose 5-phosphate: step 3/6. Its function is as follows. Catalyzes the phosphorylation of the position 2 hydroxy group of 4-diphosphocytidyl-2C-methyl-D-erythritol. The polypeptide is 4-diphosphocytidyl-2-C-methyl-D-erythritol kinase (Prochlorococcus marinus (strain MIT 9303)).